A 495-amino-acid chain; its full sequence is Phenylalanine--tRNA ligase alpha subunit (495 aa).

Residues T338, 377-379, and Y417 contribute to the L-phenylalanine site; that span reads QLE. E419 serves as a coordination point for Mg(2+). Position 442 (F442) interacts with L-phenylalanine.

This sequence belongs to the class-II aminoacyl-tRNA synthetase family. Phe-tRNA synthetase alpha subunit type 2 subfamily. Tetramer of two alpha and two beta subunits. It depends on Mg(2+) as a cofactor.

The protein resides in the cytoplasm. The catalysed reaction is tRNA(Phe) + L-phenylalanine + ATP = L-phenylalanyl-tRNA(Phe) + AMP + diphosphate + H(+). In Methanosarcina mazei (strain ATCC BAA-159 / DSM 3647 / Goe1 / Go1 / JCM 11833 / OCM 88) (Methanosarcina frisia), this protein is Phenylalanine--tRNA ligase alpha subunit.